Consider the following 311-residue polypeptide: Uridine phosphorylase 1 (311 aa).

Residues glycine 61, arginine 95, and 139 to 142 (RIGT) each bind phosphate. Residues 143-144 (SG) and 218-220 (QGR) each bind uridine.

It belongs to the PNP/UDP phosphorylase family. In terms of assembly, homodimer. The N-terminus is blocked.

It catalyses the reaction uridine + phosphate = alpha-D-ribose 1-phosphate + uracil. The enzyme catalyses 2'-deoxyuridine + phosphate = 2-deoxy-alpha-D-ribose 1-phosphate + uracil. The protein operates within pyrimidine metabolism; UMP biosynthesis via salvage pathway; uracil from uridine (phosphorylase route): step 1/1. Its activity is regulated as follows. Strongly inhibited by 2,2'-anhydro-5-ethyluridine, a competitive inhibitor. Catalyzes the reversible phosphorylytic cleavage of uridine to uracil and ribose-1-phosphate which can then be utilized as carbon and energy sources or in the rescue of pyrimidine bases for nucleotide synthesis. Shows broad substrate specificity and can also accept deoxyuridine and other analogous compounds. In Mus musculus (Mouse), this protein is Uridine phosphorylase 1.